The primary structure comprises 113 residues: RING-box protein 2 (113 aa).

Positions 1-26 (MADVEDGEETCALASHSGSSGSKSGG) are disordered. Ala-2 carries the N-acetylalanine modification. A Phosphothreonine; by CK2 modification is found at Thr-10. The Zn(2+) site is built by Cys-50, Cys-53, Cys-61, Cys-64, Cys-73, Cys-80, His-82, His-85, Cys-87, Cys-88, Cys-99, and Cys-102. Residues 61-103 (CLRCQAENKQEDCVVVWGECNHSFHNCCMSLWVKQNNRCPLCQ) form an RING-type zinc finger.

The protein belongs to the RING-box family. Catalytic component of multiple cullin-5-RING E3 ubiquitin-protein ligase complexes (ECS complexes, also named CRL5 complexes) composed of CUL5, Elongin BC (ELOB and ELOC), RNF7/RBX2 and a variable SOCS box domain-containing protein as substrate-specific recognition component. Also interacts (with lower preference) with CUL1, CUL2, CUL3, CUL4A and CUL4B; additional evidence is however required to confirm this result in vivo. Interacts with UBE2F. Interacts with CSNK2B, the interaction is not affected by phosphorylation by CK2. May also interact with DCUN1D1, DCUN1D2, DCUN1D3, DCUN1D4 and DCUN1D5. As to quaternary structure, (Microbial infection) Following infection by HIV-1 virus, component of a cullin-5-RING E3 ubiquitin-protein ligase complex (ECS complex) hijacked by the HIV-1 Vif protein. Phosphorylation at Thr-10 by CK2 promotes its degradation by the proteasome. In terms of tissue distribution, expressed in heart, liver, skeletal muscle and pancreas. At very low levels expressed in brain, placenta and lung.

The protein localises to the cytoplasm. It localises to the nucleus. It catalyses the reaction S-ubiquitinyl-[E2 ubiquitin-conjugating enzyme]-L-cysteine + [acceptor protein]-L-lysine = [E2 ubiquitin-conjugating enzyme]-L-cysteine + N(6)-ubiquitinyl-[acceptor protein]-L-lysine.. The catalysed reaction is S-[NEDD8-protein]-yl-[E2 NEDD8-conjugating enzyme]-L-cysteine + [cullin]-L-lysine = [E2 NEDD8-conjugating enzyme]-L-cysteine + N(6)-[NEDD8-protein]-yl-[cullin]-L-lysine.. It functions in the pathway protein modification; protein ubiquitination. It participates in protein modification; protein neddylation. In terms of biological role, catalytic component of multiple cullin-5-RING E3 ubiquitin-protein ligase complexes (ECS complexes), which mediate the ubiquitination and subsequent proteasomal degradation of target proteins. It is thereby involved in various biological processes, such as cell cycle progression, signal transduction and transcription. The functional specificity of the E3 ubiquitin-protein ligase ECS complexes depend on the variable SOCS box-containing substrate recognition component. Within ECS complexes, RNF7/RBX2 recruits the E2 ubiquitination enzyme to the complex via its RING-type and brings it into close proximity to the substrate. Catalytic subunit of various SOCS-containing ECS complexes, such as the ECS(SOCS7) complex, that regulate reelin signaling by mediating ubiquitination and degradation of DAB1. The ECS(SOCS2) complex mediates the ubiquitination and subsequent proteasomal degradation of phosphorylated EPOR and GHR. Promotes ubiquitination and degradation of NF1, thereby regulating Ras protein signal transduction. As part of the ECS(ASB9) complex, catalyzes ubiquitination and degradation of CKB. The ECS(SPSB3) complex catalyzes ubiquitination of nuclear CGAS. As part of the ECS(RAB40C) complex, mediates ANKRD28 ubiquitination and degradation, thereby inhibiting protein phosphatase 6 (PP6) complex activity and focal adhesion assembly during cell migration. As part of some ECS complex, catalyzes 'Lys-11'-linked ubiquitination and degradation of BTRC. ECS complexes and ARIH2 collaborate in tandem to mediate ubiquitination of target proteins; ARIH2 mediating addition of the first ubiquitin on CRLs targets. Specifically catalyzes the neddylation of CUL5 via its interaction with UBE2F. Does not catalyze neddylation of other cullins (CUL1, CUL2, CUL3, CUL4A or CUL4B). May play a role in protecting cells from apoptosis induced by redox agents. Inactive. Functionally, (Microbial infection) Following infection by HIV-1 virus, catalytic component of a cullin-5-RING E3 ubiquitin-protein ligase complex (ECS complex) hijacked by the HIV-1 Vif protein, which catalyzes ubiquitination and degradation of APOBEC3F and APOBEC3G. The polypeptide is RING-box protein 2 (Homo sapiens (Human)).